Reading from the N-terminus, the 629-residue chain is Protein fem-1 homolog B (629 aa).

ANK repeat units follow at residues 47–77, 89–118, 122–151, 155–184, 188–217, and 220–250; these read QRST…DVQQ, DGAT…NVNH, TNST…NISI, YDNT…DPNA, CGAT…AMVV, and HGMT…DAKS. The TPR repeat unit spans residues 346 to 379; sequence SHPIIYRGAVYADNMQFEQCIKLWLHALQLRQKG. 2 ANK repeats span residues 485–529 and 533–570; these read EGGS…NVNA and MGNS…HTDM.

It belongs to the fem-1 family. As to quaternary structure, component of a CRL2 E3 ubiquitin-protein ligase complex, also named ECS (Elongin BC-CUL2/5-SOCS-box protein) complex.

The protein localises to the cytoplasm. Its subcellular location is the nucleus. Its pathway is protein modification; protein ubiquitination. Substrate-recognition component of a Cul2-RING (CRL2) E3 ubiquitin-protein ligase complex of the DesCEND (destruction via C-end degrons) pathway, which recognizes a C-degron located at the extreme C terminus of target proteins, leading to their ubiquitination and degradation. The C-degron recognized by the DesCEND pathway is usually a motif of less than ten residues and can be present in full-length proteins, truncated proteins or proteolytically cleaved forms. The CRL2(FEM1B) complex specifically recognizes proteins ending with -Gly-Leu-Asp-Arg, leading to their ubiquitination and degradation. The polypeptide is Protein fem-1 homolog B (Xenopus laevis (African clawed frog)).